The following is a 189-amino-acid chain: Alanine and glycine-rich protein (189 aa).

Over residues 127-160 the composition is skewed to gly residues; it reads AGAGGGSGGGGGGGSGSGGSGGSGGSGGSGGNDG. Residues 127 to 170 are disordered; the sequence is AGAGGGSGGGGGGGSGSGGSGGSGGSGGSGGNDGNDGNDGSSSR.

As to expression, component of the organic matrix of calcified shell layers like nacre and prisms.

It localises to the secreted. The sequence is that of Alanine and glycine-rich protein from Mytilus californianus (California mussel).